We begin with the raw amino-acid sequence, 192 residues long: Peptidyl-tRNA hydrolase (192 aa).

Position 17 (tyrosine 17) interacts with tRNA. The Proton acceptor role is filled by histidine 22. Phenylalanine 67, asparagine 69, and asparagine 115 together coordinate tRNA.

The protein belongs to the PTH family. As to quaternary structure, monomer.

It is found in the cytoplasm. The catalysed reaction is an N-acyl-L-alpha-aminoacyl-tRNA + H2O = an N-acyl-L-amino acid + a tRNA + H(+). In terms of biological role, hydrolyzes ribosome-free peptidyl-tRNAs (with 1 or more amino acids incorporated), which drop off the ribosome during protein synthesis, or as a result of ribosome stalling. Functionally, catalyzes the release of premature peptidyl moieties from peptidyl-tRNA molecules trapped in stalled 50S ribosomal subunits, and thus maintains levels of free tRNAs and 50S ribosomes. The sequence is that of Peptidyl-tRNA hydrolase from Methylobacillus flagellatus (strain ATCC 51484 / DSM 6875 / VKM B-1610 / KT).